The following is a 193-amino-acid chain: Probable thymidylate kinase (193 aa).

An ATP-binding site is contributed by 7–14 (GIDGSGKT).

This sequence belongs to the thymidylate kinase family.

It catalyses the reaction dTMP + ATP = dTDP + ADP. This is Probable thymidylate kinase from Pyrobaculum calidifontis (strain DSM 21063 / JCM 11548 / VA1).